The chain runs to 74 residues: Antimicrobial peptide HsAp1 (74 aa).

The first 21 residues, 1 to 21 (MSRRVILTLVLVTILVKTMAG), serve as a signal peptide directing secretion. A propeptide spanning residues 22–33 (MESKKVETTDEI) is cleaved from the precursor. At P65 the chain carries Proline amide. Residues 69–74 (AISEQT) constitute a propeptide that is removed on maturation.

The protein belongs to the non-disulfide-bridged peptide (NDBP) superfamily. Medium-length antimicrobial peptide (group 3) family. Expressed by the venom gland.

It localises to the secreted. Its subcellular location is the target cell membrane. In terms of biological role, possesses antimicrobial activity against both Gram-negative (MIC=23.8-51.2 uM) and Gram-positive (MIC=11.8-46.5 uM) bacteria, as well as against the fungus C.tropicalis (MIC=48.6 uM). Also possesses a relatively high hemolytic activity. May act by disrupting the integrity of the bacterial cell membrane. The protein is Antimicrobial peptide HsAp1 of Heterometrus spinifer (Asia giant forest scorpion).